Here is a 218-residue protein sequence, read N- to C-terminus: Thiopurine S-methyltransferase (218 aa).

Residues tryptophan 10, leucine 45, glutamate 66, and arginine 123 each contribute to the S-adenosyl-L-methionine site.

Belongs to the class I-like SAM-binding methyltransferase superfamily. TPMT family.

It is found in the cytoplasm. It catalyses the reaction S-adenosyl-L-methionine + a thiopurine = S-adenosyl-L-homocysteine + a thiopurine S-methylether.. The sequence is that of Thiopurine S-methyltransferase from Xanthomonas campestris pv. campestris (strain 8004).